The following is a 353-amino-acid chain: Ferredoxin--NADP reductase 1 (353 aa).

8 residues coordinate FAD: Thr-14, Asp-33, Gln-41, Tyr-46, Ala-86, Phe-121, Asp-289, and Thr-330.

Belongs to the ferredoxin--NADP reductase type 2 family. In terms of assembly, homodimer. Requires FAD as cofactor.

The enzyme catalyses 2 reduced [2Fe-2S]-[ferredoxin] + NADP(+) + H(+) = 2 oxidized [2Fe-2S]-[ferredoxin] + NADPH. The chain is Ferredoxin--NADP reductase 1 from Christiangramia forsetii (strain DSM 17595 / CGMCC 1.15422 / KT0803) (Gramella forsetii).